The chain runs to 230 residues: Ion-translocating oxidoreductase complex subunit E (230 aa).

6 consecutive transmembrane segments (helical) span residues 18–38 (ALVQ…ATNA), 39–59 (LGLG…ISTL), 63–83 (TPTE…VSAV), 86–106 (LINA…PLIV), 128–148 (ALDG…LGAM), and 182–202 (PFLL…MLAG).

It belongs to the NqrDE/RnfAE family. In terms of assembly, the complex is composed of six subunits: RsxA, RsxB, RsxC, RsxD, RsxE and RsxG.

The protein resides in the cell inner membrane. Its function is as follows. Part of a membrane-bound complex that couples electron transfer with translocation of ions across the membrane. Required to maintain the reduced state of SoxR. The sequence is that of Ion-translocating oxidoreductase complex subunit E from Escherichia fergusonii (strain ATCC 35469 / DSM 13698 / CCUG 18766 / IAM 14443 / JCM 21226 / LMG 7866 / NBRC 102419 / NCTC 12128 / CDC 0568-73).